We begin with the raw amino-acid sequence, 468 residues long: UDP-N-acetylmuramate--L-alanine ligase (468 aa).

117-123 is a binding site for ATP; sequence GTHGKTT.

It belongs to the MurCDEF family.

It localises to the cytoplasm. It catalyses the reaction UDP-N-acetyl-alpha-D-muramate + L-alanine + ATP = UDP-N-acetyl-alpha-D-muramoyl-L-alanine + ADP + phosphate + H(+). The protein operates within cell wall biogenesis; peptidoglycan biosynthesis. Its function is as follows. Cell wall formation. This is UDP-N-acetylmuramate--L-alanine ligase from Maricaulis maris (strain MCS10) (Caulobacter maris).